Reading from the N-terminus, the 316-residue chain is Methionyl-tRNA formyltransferase (316 aa).

112 to 115 provides a ligand contact to (6S)-5,6,7,8-tetrahydrofolate; that stretch reads SLLP.

It belongs to the Fmt family.

It catalyses the reaction L-methionyl-tRNA(fMet) + (6R)-10-formyltetrahydrofolate = N-formyl-L-methionyl-tRNA(fMet) + (6S)-5,6,7,8-tetrahydrofolate + H(+). Attaches a formyl group to the free amino group of methionyl-tRNA(fMet). The formyl group appears to play a dual role in the initiator identity of N-formylmethionyl-tRNA by promoting its recognition by IF2 and preventing the misappropriation of this tRNA by the elongation apparatus. This Actinobacillus pleuropneumoniae serotype 5b (strain L20) protein is Methionyl-tRNA formyltransferase.